Here is a 148-residue protein sequence, read N- to C-terminus: Small ribosomal subunit protein eS19 (148 aa).

It belongs to the eukaryotic ribosomal protein eS19 family. As to quaternary structure, part of the 30S ribosomal subunit.

Its function is as follows. May be involved in maturation of the 30S ribosomal subunit. This is Small ribosomal subunit protein eS19 from Methanocaldococcus jannaschii (strain ATCC 43067 / DSM 2661 / JAL-1 / JCM 10045 / NBRC 100440) (Methanococcus jannaschii).